Consider the following 153-residue polypeptide: SsrA-binding protein (153 aa).

A disordered region spans residues 129–153 (KREDMKKKDQSREMAQALREKSKSH).

It belongs to the SmpB family.

The protein resides in the cytoplasm. In terms of biological role, required for rescue of stalled ribosomes mediated by trans-translation. Binds to transfer-messenger RNA (tmRNA), required for stable association of tmRNA with ribosomes. tmRNA and SmpB together mimic tRNA shape, replacing the anticodon stem-loop with SmpB. tmRNA is encoded by the ssrA gene; the 2 termini fold to resemble tRNA(Ala) and it encodes a 'tag peptide', a short internal open reading frame. During trans-translation Ala-aminoacylated tmRNA acts like a tRNA, entering the A-site of stalled ribosomes, displacing the stalled mRNA. The ribosome then switches to translate the ORF on the tmRNA; the nascent peptide is terminated with the 'tag peptide' encoded by the tmRNA and targeted for degradation. The ribosome is freed to recommence translation, which seems to be the essential function of trans-translation. The sequence is that of SsrA-binding protein from Geobacter sulfurreducens (strain ATCC 51573 / DSM 12127 / PCA).